Consider the following 228-residue polypeptide: Max-interacting protein 1 (228 aa).

2 disordered regions span residues 29–76 (GYAS…NELE) and 162–228 (GSTI…SFTS). Over residues 43 to 56 (QHSKPPRRLSRAQK) the composition is skewed to basic residues. Polar residues predominate over residues 57–70 (HSSGSSNTSTANRS). The bHLH domain occupies 67-119 (ANRSTHNELEKNRRAHLRLCLERLKVLIPLGPDCTRHTTLGLLNKAKAHIKKL). Positions 173 to 183 (EREEIEVDVES) are enriched in acidic residues. Over residues 216 to 228 (GYSSASVKLSFTS) the composition is skewed to polar residues.

In terms of assembly, efficient DNA binding requires dimerization with another bHLH protein. Binds DNA as a heterodimer with MAX. Interacts with SMC3. Interacts with RNF17.

The protein localises to the nucleus. In terms of biological role, transcriptional repressor. MXI1 binds with MAX to form a sequence-specific DNA-binding protein complex which recognizes the core sequence 5'-CAC[GA]TG-3'. MXI1 thus antagonizes MYC transcriptional activity by competing for MAX. This is Max-interacting protein 1 (Mxi1) from Rattus norvegicus (Rat).